A 185-amino-acid polypeptide reads, in one-letter code: Photosystem I assembly protein Ycf4 (185 aa).

The next 2 membrane-spanning stretches (helical) occupy residues 20-40 (GNFF…AVGA) and 57-77 (ILFF…LFIS).

Belongs to the Ycf4 family.

The protein localises to the plastid. The protein resides in the chloroplast thylakoid membrane. Seems to be required for the assembly of the photosystem I complex. The chain is Photosystem I assembly protein Ycf4 from Oryza nivara (Indian wild rice).